Consider the following 816-residue polypeptide: MAMWQGAMDNRGFQQGSFSSFRSSSSDEDLMDIPGTAMDFSMRDDVPPLDREIEEDKSYNGGGIGSSNRIMDFLEEPIPGVGTYDDFNTIDWVREKSRDRDRHREITNKSKESTWALIHSVSDAFSGWLLMLLIGLFSGSLAGLIDISAHWMTDLKEGICTGGFWFNHEHCCWNSENVTFEDTDKCPEWNSWSQLIINTDEGAFAYIVNYFMYVLWALLFAFLAVSLVKVFAPYACGSGIPEIKTILSGFIIRGYLGKWTLVIKTITLVLAVSSGLSLGKEGPLVHVACCCGNILCHRFNKYRKNEAKRREVLSAAAAAGVSVAFGAPIGGVLFSLEEVSYYFPLKTLWRSFFAALVAAFTLRSINPFGNSRLVLFYVEFHTPWHLFELVPFILLGIFGGLWGALFIRTNIAWCRKRKTTQLGKYPVIEVLIVTAITAILAFPNEYTRMSTSELISELFNDCGLLDSSKLCDYENRFNTSKGADLPDRPAGVGVYNAMWQLALALILKIVITIFTFGMKIPSGLFIPSMAVGAIAGRLLGVGMEQLAYYHHDWTIFNSWCSQGADCITPGLYAMVGAAACLGGVTRMTVSLVVIMFELTGGLEYIVPLMAAAMTSKWVADALGREGIYDAHIRLNGYPFLEAKEEFAHKTLAMDVMKPRRNDPLLTVLTQDSMTVEDVETIISETTYSGFPVVVSRESQRLVGFVLRRDLIISIENARKKQDGVVSTSIIYFTEHSPPMPPYTPPTLKLRNILDLSPFTVTDLTPMEIVVDIFRKLGLRQCLVTHNGRLLGIITKKDVLKHIAQMANQDPDSILFN.

Over 1–124 the chain is Cytoplasmic; sequence MAMWQGAMDN…WALIHSVSDA (124 aa). Helical transmembrane passes span 125 to 162 and 208 to 231; these read FSGW…ICTG and VNYF…VKVF. Residues 237–241 carry the Selectivity filter part_1 motif; that stretch reads GSGIP. Ser-238 is a chloride binding site. An intramembrane region (helical) is located at residues 240–247; the sequence is IPEIKTIL. A run of 2 helical transmembrane segments spans residues 256–275 and 281–300; these read LGKW…VSSG and EGPL…HRFN. A Selectivity filter part_2 motif is present at residues 279 to 283; the sequence is GKEGP. Intramembrane regions (helical) lie at residues 312–324 and 328–336; these read VLSA…VSVA and PIGGVLFSL. A run of 5 helical transmembrane segments spans residues 348–366, 389–414, 422–442, 498–518, and 523–542; these read LWRS…RSIN, LVPF…IAWC, LGKY…ILAF, MWQL…TFGM, and GLFI…LGVG. The Selectivity filter part_3 signature appears at 523–527; it reads GLFIP. Chloride is bound at residue Phe-525. Positions 570–584 form an intramembrane region, helical; the sequence is GLYAMVGAAACLGGV. Positions 585-587 form an intramembrane region, note=Loop between two helices; sequence TRM. An intramembrane region (helical) is located at residues 588-599; sequence TVSLVVIMFELT. The segment at residues 600–604 is an intramembrane region (note=Loop between two helices); that stretch reads GGLEY. Residues 605 to 622 form a helical membrane-spanning segment; sequence IVPLMAAAMTSKWVADAL. Topologically, residues 623 to 816 are cytoplasmic; the sequence is GREGIYDAHI…NQDPDSILFN (194 aa). Tyr-628 is a chloride binding site. CBS domains are found at residues 656–720 and 752–812; these read MKPR…ARKK and ILDL…DPDS. Residues Thr-666, 687–689, and 794–797 contribute to the ATP site; these read YSG and TKKD.

It belongs to the chloride channel (TC 2.A.49) family. ClC-5/CLCN5 subfamily. As to quaternary structure, interacts with NEDD4 and NEDD4L. Post-translationally, ubiquitinated by NEDD4L in the presence of albumin; which promotes endocytosis and proteasomal degradation.

The protein resides in the golgi apparatus membrane. It is found in the endosome membrane. Its subcellular location is the cell membrane. It carries out the reaction 2 chloride(in) + H(+)(out) = 2 chloride(out) + H(+)(in). Its function is as follows. Proton-coupled chloride transporter. Functions as antiport system and exchanges chloride ions against protons. Important for normal acidification of the endosome lumen. May play an important role in renal tubular function. The CLC channel family contains both chloride channels and proton-coupled anion transporters that exchange chloride or another anion for protons. The absence of conserved gating glutamate residues is typical for family members that function as channels. The protein is H(+)/Cl(-) exchange transporter 5 (CLCN5) of Oryctolagus cuniculus (Rabbit).